We begin with the raw amino-acid sequence, 165 residues long: Nucleotide-binding protein CHY_1197 (165 aa).

The protein belongs to the YajQ family.

Functionally, nucleotide-binding protein. In Carboxydothermus hydrogenoformans (strain ATCC BAA-161 / DSM 6008 / Z-2901), this protein is Nucleotide-binding protein CHY_1197.